The following is a 59-amino-acid chain: Venom protein 27.7 (59 aa).

The N-terminal stretch at 1 to 29 is a signal peptide; sequence MTFITLTIGLSLRTIFLIFIFLPPPHLLA.

The protein belongs to the non-disulfide-bridged peptide (NDBP) superfamily. As to expression, expressed by the venom gland.

It is found in the secreted. This Lychas mucronatus (Chinese swimming scorpion) protein is Venom protein 27.7.